Here is a 414-residue protein sequence, read N- to C-terminus: Wilms tumor protein homolog A (414 aa).

Residues Lys-55 and Lys-158 each participate in a glycyl lysine isopeptide (Lys-Gly) (interchain with G-Cter in SUMO) cross-link. A 9aaTAD motif is present at residues 217–225; it reads MTWNQMNLG. 3 C2H2-type zinc fingers span residues 288 to 312, 318 to 342, and 348 to 370; these read FMCA…SRKH, YQCD…QRRH, and FQCK…TRTH. 2 important for interaction with target DNA regions span residues 332-346 and 358-366; these read SDQL…TGIK and SRSDHLKTH. The short motif at 373-375 is the KTS motif element; sequence KTS. Residues 379 to 403 form a C2H2-type 4 zinc finger; the sequence is FSCRWPSCQKKFARSDELVRHHNMH.

Belongs to the EGR C2H2-type zinc-finger protein family. As to expression, expressed around the pronephric anlage and in the pronephros; expression is restricted to the splanchnic mesoderm (the site where the glomus forms) from tailbud stages, and the glomus of early tadpoles. Not expressed in the pronephric tubules or pronephric duct. In tadpoles (stage 38-39), additional expression begins in the heart. Also expressed in the adult kidney (mesonephros).

It localises to the nucleus. Its subcellular location is the cytoplasm. The protein resides in the nucleus speckle. Functionally, transcription factor required for development of the vascular component of the pronephric kidney, the glomus; may repress tubule-specific gene expression in the portion of the pronephros fated to form the glomus. Recognizes and binds to the DNA sequence 5'-GCG(T/G)GGGCG-3'. Inhibits Wnt-signaling during embryonic development. Function may be isoform-specific: the isoform containing the KTS motif is less effective in inhibiting wnt signaling. The chain is Wilms tumor protein homolog A (wt1-a) from Xenopus laevis (African clawed frog).